The following is a 305-amino-acid chain: Sodium/potassium-transporting ATPase subunit beta-1 (305 aa).

Residues 1–32 (MAREKSTDDGGGWKKFLWDSEKKQVLGRTGTS) lie on the Cytoplasmic side of the membrane. Residues 33–53 (WFKIFVFYLIFYGCLAGIFIG) form a helical; Signal-anchor for type II membrane protein membrane-spanning segment. At 54–305 (TIQVMLLTIS…RFEVKIEVKS (252 aa)) the chain is on the extracellular side. N114 is a glycosylation site (N-linked (GlcNAc...) asparagine). The cysteines at positions 127 and 150 are disulfide-linked. The N-linked (GlcNAc...) asparagine glycan is linked to N159. A disulfide bridge connects residues C160 and C176. N-linked (GlcNAc...) asparagine glycans are attached at residues N194 and N267. C215 and C278 are joined by a disulfide.

The protein belongs to the X(+)/potassium ATPases subunit beta family. As to quaternary structure, the sodium/potassium-transporting ATPase is composed of a catalytic alpha subunit, an auxiliary non-catalytic beta subunit and an additional regulatory subunit.

It localises to the cell membrane. Its function is as follows. This is the non-catalytic component of the active enzyme, which catalyzes the hydrolysis of ATP coupled with the exchange of Na(+) and K(+) ions across the plasma membrane. The beta subunit regulates, through assembly of alpha/beta heterodimers, the number of sodium pumps transported to the plasma membrane. This Tetronarce californica (Pacific electric ray) protein is Sodium/potassium-transporting ATPase subunit beta-1 (atp1b1).